Reading from the N-terminus, the 878-residue chain is NUT family member 2E (878 aa).

Disordered regions lie at residues 273 to 324 (WSQG…DDSC), 417 to 511 (QKSQ…VPEE), 527 to 560 (LLGP…PPDP), 622 to 757 (RLPP…EEEE), and 775 to 878 (WLPQ…HCSQ). Composition is skewed to pro residues over residues 278–288 (PLPPPPPPAAQ) and 427–444 (CLPP…PPAP). Basic and acidic residues-rich tracts occupy residues 537–551 (EPEK…KQPQ) and 622–631 (RLPPLKEKQH).

The protein belongs to the NUT family.

This Homo sapiens (Human) protein is NUT family member 2E (NUTM2E).